The sequence spans 308 residues: uncharacterized protein (308 aa).

The region spanning 11-87 (KRLDSLLASL…LKLEVLFEDK (77 aa)) is the S4 RNA-binding domain. Asp131 is an active-site residue.

The protein belongs to the pseudouridine synthase RluA family.

It carries out the reaction a uridine in RNA = a pseudouridine in RNA. This is an uncharacterized protein from Mycoplasma genitalium (strain ATCC 33530 / DSM 19775 / NCTC 10195 / G37) (Mycoplasmoides genitalium).